An 867-amino-acid chain; its full sequence is Ataxin-7 (867 aa).

Basic and acidic residues predominate over residues 1-15 (MSERAADDVRGEPRR). A disordered region spans residues 1-59 (MSERAADDVRGEPRRAAGGAAAARQQQQQPQPLQPQRQHPPLRRPRAEDGGTGDTTTSA). A compositionally biased stretch (low complexity) spans 16-39 (AAGGAAAARQQQQQPQPLQPQRQH). K222 is subject to N6-acetyllysine. Residue K243 forms a Glycyl lysine isopeptide (Lys-Gly) (interchain with G-Cter in SUMO); alternate linkage. K243 participates in a covalent cross-link: Glycyl lysine isopeptide (Lys-Gly) (interchain with G-Cter in SUMO2); alternate. Residues 320–387 (KRLSEREFDP…KAREKELIRH (68 aa)) enclose the SCA7 domain. The span at 379–400 (AREKELIRHDSQQVPHPLRDPH) shows a compositional bias: basic and acidic residues. Disordered regions lie at residues 379–483 (AREK…EESV), 600–711 (HGTT…SHSV), and 845–867 (TGNISGAQGLTNNSLLHQPKARP). Composition is skewed to pro residues over residues 426–437 (PQTPSLPRPPGC) and 447–462 (IDPPPGQESPHPPLPA). Over residues 472-481 (EEGEGDDREE) the composition is skewed to acidic residues. The span at 619–647 (SVQSRQVSASSSPPSTPSGLSSVPSSPLS) shows a compositional bias: low complexity. Basic residues predominate over residues 649-659 (KPQKWKPSKSI). The segment covering 665–674 (SALSTNCHNA) has biased composition (polar residues). The segment covering 689–711 (SSPLLVPSSSSSSSSSSSSSHSV) has biased composition (low complexity). The segment covering 846-860 (GNISGAQGLTNNSLL) has biased composition (polar residues).

Belongs to the ataxin-7 family. Component of the SAGA transcription coactivator-HAT complex, at least composed of SUPT3H, GCN5L2, TAF5L, TAF6L, SUPT7L, TADA3L, TAD1L, TAF10, TAF12, TRRAP, TAF9 and ATXN7. The STAGA core complex is associated with a subcomplex required for histone deubiquitination composed of ATXN7L3, ENY2 and USP22. Interacts with SORBS1, PSMC1 and CRX. Interacts with TRRAP, GCN5L2 and TAF10. Interacts with alpha tubulin. In terms of processing, proteolytically cleaved by caspase-7 (CASP7). Sumoylation has no effect on subcellular location or interaction with components of the STAGA complex. Widely expressed in adult tissues, with the highest expression in heart, brain, liver and kidney.

It is found in the nucleus. The protein localises to the nucleolus. Its subcellular location is the nucleus matrix. The protein resides in the cytoplasm. It localises to the cytoskeleton. Acts as a component of the SAGA (aka STAGA) transcription coactivator-HAT complex. Mediates the interaction of SAGA complex with the CRX and is involved in CRX-dependent gene activation. Probably involved in tethering the deubiquitination module within the SAGA complex. Necessary for microtubule cytoskeleton stabilization. Involved in neurodegeneration. This is Ataxin-7 (Atxn7) from Mus musculus (Mouse).